Consider the following 567-residue polypeptide: Thiol:disulfide interchange protein DsbD (567 aa).

A signal peptide spans 1–19 (MAQRIFTLILLLCSTSAFA). Disulfide bonds link Cys-122-Cys-128 and Cys-185-Cys-307. Transmembrane regions (helical) follow at residues 170-192 (ALWALLIGIGIAFTPCVLPMYPL), 212-234 (LAFIYVQGMALTYTALGLVVAAA), 246-268 (YVLIGLAIVFTLLALSMFGLFTL), 297-319 (GAIAGLICSPCTTAPLSAILLYI), 326-348 (WLGGGTLYLYALGMGLPLMLVTV), 358-380 (GPWMAHVKTAFGFVILALPVFLL), and 387-409 (AWGLRLWSLLGVAFFGWAFITSL). A Thioredoxin domain is found at 435-567 (QDWAFGSPSA…FSAHLHDRQP (133 aa)). A disulfide bond links Cys-482 and Cys-485.

Belongs to the thioredoxin family. DsbD subfamily.

The protein resides in the cell inner membrane. The enzyme catalyses [protein]-dithiol + NAD(+) = [protein]-disulfide + NADH + H(+). The catalysed reaction is [protein]-dithiol + NADP(+) = [protein]-disulfide + NADPH + H(+). Its function is as follows. Required to facilitate the formation of correct disulfide bonds in some periplasmic proteins and for the assembly of the periplasmic c-type cytochromes. Acts by transferring electrons from cytoplasmic thioredoxin to the periplasm. This transfer involves a cascade of disulfide bond formation and reduction steps. This is Thiol:disulfide interchange protein DsbD from Salmonella typhimurium (strain LT2 / SGSC1412 / ATCC 700720).